Consider the following 442-residue polypeptide: Glutamate synthase large subunit-like protein (442 aa).

A disordered region spans residues 108–133 (LGRGATASGTSTTTGDGGMTDEERGH). Residues 109 to 121 (GRGATASGTSTTT) show a composition bias toward low complexity.

The protein belongs to the glutamate synthase family.

In Rhizobium meliloti (strain 1021) (Ensifer meliloti), this protein is Glutamate synthase large subunit-like protein (glxD).